Here is a 198-residue protein sequence, read N- to C-terminus: dTTP/UTP pyrophosphatase (198 aa).

Residue Asp75 is the Proton acceptor of the active site.

Belongs to the Maf family. YhdE subfamily. A divalent metal cation serves as cofactor.

It localises to the cytoplasm. The enzyme catalyses dTTP + H2O = dTMP + diphosphate + H(+). It catalyses the reaction UTP + H2O = UMP + diphosphate + H(+). In terms of biological role, nucleoside triphosphate pyrophosphatase that hydrolyzes dTTP and UTP. May have a dual role in cell division arrest and in preventing the incorporation of modified nucleotides into cellular nucleic acids. In Wolbachia pipientis wMel, this protein is dTTP/UTP pyrophosphatase.